The following is a 236-amino-acid chain: MPRRAPLRVARGSLDAWLLGGLWVCALGCLCGVGMAAPGAGAGAGGSLGAQRPCQAPQQWEGRQVLYRQSTGRYSRALLSYDGLNQRVRVLDERKALIPCKRLFEYILLYKDGVMFQIEQATKQCSKITLTEPWDPLDIPQNSTFEDQYSIGGPQEQITVQEWSDRKSARSYETWIGIYTVKDCYPVQETVTKNYSVILSTRFFDIQLGIKDPSVFIPPSTCQTAQPERMSEECSW.

Positions M1–M35 are cleaved as a signal peptide. Disulfide bonds link C54/C184, C100/C234, and C125/C222. N142 and N194 each carry an N-linked (GlcNAc...) asparagine glycan.

It belongs to the ependymin family. As to quaternary structure, homodimer. Post-translationally, N-glycosylated; the glycan contains mannose-6-phosphate moieties.

The protein localises to the lysosome lumen. It is found in the secreted. Functionally, binds anionic lipids and gangliosides at acidic pH. The protein is Mammalian ependymin-related protein 1 (EPDR1) of Bos taurus (Bovine).